A 648-amino-acid polypeptide reads, in one-letter code: MITITFPDGAVREFESGVTTFEIADSISKSLAKKALAGKFNGQLIDTTRAIEEDGSIEIITADHEDAFEVLRHSAAHLFAQAAKRLFPKLHLGVGPAIADGFYYDTDNADGQISNEDLPRIEEEMKKIVKENFPCIREEITKEEALELFKDDPYKVELINEHADDAAGLTVYRQGEFVDLCRGPHVPSTGRIQVFHLLNVAGAYWRGNSDNNMMQRVYGTAWFDKKDLKAYLTRLEEAKERDHRKLGKELDLFMISQEVGQGLPFWLPNGATIRRTLERYITDKELASGYQHVYTPPLASVELYKTSGHWEHYQEDMFPTMDMGDGEEFVLRPMNCPHHIQVYKNHVHSYRELPIRIAELGMMHRYEKSGALSGLQRVREMTLNDGHLFVMPEQIQEEFQRALQLIIDVYEDFNLTDYRFRLSYRDPKDTHKYYDNDEMWENAQSMLKAALDEMGVDYFEAEGEAAFYGPKLDIQVKTALGNEETLSTIQLDFLLPERFNLSYIGADGEEHRPVMIHRGVISTMERFTAILIETYKGAFPTWLAPRQVTVIPISNEAHIDYAWEVAKTLRDHGIRADVDDRNEKMQYKIRASQTSKIPYQLIVGDKEMQDKSVNVRRYGSKATHTEAISAFVDNILADIARKSRPAEG.

The TGS domain maps to 1 to 61 (MITITFPDGA…EEDGSIEIIT (61 aa)). The catalytic stretch occupies residues 242 to 540 (DHRKLGKELD…LIETYKGAFP (299 aa)). Positions 336, 387, and 517 each coordinate Zn(2+).

Belongs to the class-II aminoacyl-tRNA synthetase family. In terms of assembly, homodimer. Zn(2+) is required as a cofactor.

It localises to the cytoplasm. The catalysed reaction is tRNA(Thr) + L-threonine + ATP = L-threonyl-tRNA(Thr) + AMP + diphosphate + H(+). Functionally, catalyzes the attachment of threonine to tRNA(Thr) in a two-step reaction: L-threonine is first activated by ATP to form Thr-AMP and then transferred to the acceptor end of tRNA(Thr). Also edits incorrectly charged L-seryl-tRNA(Thr). In Streptococcus equi subsp. zooepidemicus (strain H70), this protein is Threonine--tRNA ligase.